A 623-amino-acid polypeptide reads, in one-letter code: Quinoprotein ethanol dehydrogenase (623 aa).

The N-terminal stretch at 1 to 34 (MTTRTSPAPAGLLRPSLHCLAFAVALGSAGAALA) is a signal peptide. The Ca(2+) site is built by aspartate 45, threonine 48, and aspartate 51. Position 95 (glutamate 95) interacts with pyrroloquinoline quinone. Residues cysteine 139 and cysteine 140 are joined by a disulfide bond. Residues arginine 145, threonine 189, and 207-209 (HGS) each bind pyrroloquinoline quinone. Residue glutamate 213 participates in Ca(2+) binding. Positions 244 to 281 (LNGKDSTVTGDVKAPSWPDDRNSPTGKVESWSHGGGAP) are disordered. Ca(2+)-binding residues include asparagine 300 and aspartate 350. Aspartate 350 functions as the Proton acceptor in the catalytic mechanism. Arginine 378 serves as a coordination point for pyrroloquinoline quinone. The tract at residues 413-434 (GRPVEREGQRPPLPEPGQKHGK) is disordered. Pyrroloquinoline quinone contacts are provided by tryptophan 523 and alanine 587.

Belongs to the bacterial PQQ dehydrogenase family. Homodimer. Interacts with cytochrome c550. It depends on pyrroloquinoline quinone as a cofactor. Ca(2+) is required as a cofactor. In terms of processing, the disulfide ring formed between the two adjacent cysteine residues Cys-139 and Cys-140 is essential for efficient electron transfer at pH 7 from QEDH to its natural electron acceptor cytochrome c550.

Its subcellular location is the periplasm. It catalyses the reaction a primary alcohol + 2 Fe(III)-[cytochrome c] = an aldehyde + 2 Fe(II)-[cytochrome c] + 2 H(+). It carries out the reaction ethanol + 2 Fe(III)-[cytochrome c] = acetaldehyde + 2 Fe(II)-[cytochrome c] + 2 H(+). The enzyme catalyses butan-1-ol + 2 Fe(III)-[cytochrome c] = butanal + 2 Fe(II)-[cytochrome c] + 2 H(+). The catalysed reaction is propan-2-ol + 2 Fe(III)-[cytochrome c] = acetone + 2 Fe(II)-[cytochrome c] + 2 H(+). It catalyses the reaction 1-propanol + 2 Fe(III)-[cytochrome c] = propanal + 2 Fe(II)-[cytochrome c] + 2 H(+). The protein operates within alcohol metabolism; ethanol degradation; acetate from ethanol: step 1/2. Its activity is regulated as follows. Inhibited by cyclopropanone ethylhemiketal. Activated by ammonia (500mM), methylamine (5mM), ethylamine (5mM), octylamine (5mM), ethanolamine (5mM) and 1-amino-2-propanol (5mM), in assays using artificial electron acceptors. Ammonia is not needed for, nor does it stimulate, the ethanol-oxidizing activity when using the natural electron acceptor cytochrome c550. Its function is as follows. Catalyzes the oxidation of ethanol and other primary alcohols to the corresponding aldehydes, except methanol, which is a very poor substrate. Uses a specific inducible cytochrome c550, encoded by the adjacent gene in the locus, as electron acceptor. Is a key enzyme of the carbon and energy metabolism during growth of P.aeruginosa on ethanol as the sole carbon and energy source. Is also able to use secondary alcohols as well as aminoalcohols like ethanolamine and 1-amino-2-propanol, and aldehydes as substrates. This is Quinoprotein ethanol dehydrogenase from Pseudomonas aeruginosa (strain ATCC 15692 / DSM 22644 / CIP 104116 / JCM 14847 / LMG 12228 / 1C / PRS 101 / PAO1).